Here is a 101-residue protein sequence, read N- to C-terminus: Large ribosomal subunit protein uL23c (101 aa).

The protein belongs to the universal ribosomal protein uL23 family. Part of the 50S ribosomal subunit.

It localises to the plastid. The protein resides in the chloroplast. Functionally, binds to 23S rRNA. The protein is Large ribosomal subunit protein uL23c (rpl23) of Cyanidium caldarium (Red alga).